The sequence spans 356 residues: UDP-N-acetylglucosamine--N-acetylmuramyl-(pentapeptide) pyrophosphoryl-undecaprenol N-acetylglucosamine transferase (356 aa).

UDP-N-acetyl-alpha-D-glucosamine contacts are provided by Arg-166, Ser-196, and Gln-290.

It belongs to the glycosyltransferase 28 family. MurG subfamily.

It localises to the cell membrane. It catalyses the reaction Mur2Ac(oyl-L-Ala-gamma-D-Glu-L-Lys-D-Ala-D-Ala)-di-trans,octa-cis-undecaprenyl diphosphate + UDP-N-acetyl-alpha-D-glucosamine = beta-D-GlcNAc-(1-&gt;4)-Mur2Ac(oyl-L-Ala-gamma-D-Glu-L-Lys-D-Ala-D-Ala)-di-trans,octa-cis-undecaprenyl diphosphate + UDP + H(+). It participates in cell wall biogenesis; peptidoglycan biosynthesis. Its function is as follows. Cell wall formation. Catalyzes the transfer of a GlcNAc subunit on undecaprenyl-pyrophosphoryl-MurNAc-pentapeptide (lipid intermediate I) to form undecaprenyl-pyrophosphoryl-MurNAc-(pentapeptide)GlcNAc (lipid intermediate II). The sequence is that of UDP-N-acetylglucosamine--N-acetylmuramyl-(pentapeptide) pyrophosphoryl-undecaprenol N-acetylglucosamine transferase from Staphylococcus aureus (strain bovine RF122 / ET3-1).